The following is a 213-amino-acid chain: MAITQFRLFKVCTCLATVFSFLKRLICRSGRGRKLSGDQITLPTTVDYSSVPKQTDVEEWTSWDEDAPTSVKIEGGNGNVATQQNALEQLEPDYFKDMTPTIRKTQKIIIKKREPLNFGIPDGSTGFSSRLAATQDMPFIHQSPELGDLDTWQENTNAWEEEEDAAWQAEEVLRQQKIADREKRAAEQQRKRMEKEAQRLMRKEQNKIGVKLS.

Residues M1 to F6 are Extracellular-facing. Residues R7 to C27 form a helical; Signal-anchor for type III membrane protein membrane-spanning segment. Residues R28 to S213 are Cytoplasmic-facing. S36 is modified (phosphoserine). The residue at position 41 (T41) is a Phosphothreonine. Y94 is subject to Phosphotyrosine. The stretch at E163–K211 forms a coiled coil. The span at A179–N206 shows a compositional bias: basic and acidic residues. Positions A179 to S213 are disordered.

Homodimer.

It is found in the golgi apparatus membrane. Functionally, may participate in suppression of cell proliferation and induces apoptotic cell death through activation of interleukin-1-beta converting enzyme (ICE)-like proteases. In Canis lupus familiaris (Dog), this protein is Receptor-binding cancer antigen expressed on SiSo cells (EBAG9).